The chain runs to 377 residues: Guanine nucleotide-binding protein subunit alpha-13 (377 aa).

S-palmitoyl cysteine attachment occurs at residues C14 and C18. Residues 47–377 (RLVKILLLGA…HDNLKQLMLQ (331 aa)) enclose the G-alpha domain. The segment at 50–63 (KILLLGAGESGKST) is G1 motif. Residues 58–63 (ESGKST), S173, and 197–200 (LLAR) contribute to the GTP site. S62 is a Mg(2+) binding site. A G2 motif region spans residues 195–203 (DILLARRPT). T203 lines the Mg(2+) pocket. The residue at position 203 (T203) is a Phosphothreonine. A G3 motif region spans residues 218-227 (FKMVDVGGQR). The segment at 287-294 (ILFLNKTD) is G4 motif. GTP is bound by residues 291–294 (NKTD) and A349. Residues 347–352 (TTAINT) are G5 motif.

Belongs to the G-alpha family. G(12) subfamily. In terms of assembly, g proteins are composed of 3 units; alpha, beta and gamma. The alpha chain contains the guanine nucleotide binding site. Interacts with UBXD5. Interacts with HAX1. Interacts (in GTP-bound form) with PPP5C (via TPR repeats); activates PPP5C phosphatase activity and translocates PPP5C to the cell membrane. Interacts with RGS22. Interacts (in GTP-bound form) with ARHGEF1. Interacts (in GTP-bound form) with ARHGEF11 (via RGS domain). Interacts (in GTP-bound form) with ARHGEF12 (via RGS domain). Interacts with CTNND1. Interacts with GAS2L2. Interacts with GPR35. Interacts with GPR174. In terms of processing, phosphorylation on Thr-203 destabilizes the heterotrimer of alpha, beta and gamma, and inhibits Rho activation. As to expression, expressed in brain and testis, as well as in kidney and sperm (at protein level).

The protein localises to the membrane. It is found in the melanosome. It localises to the cytoplasm. The protein resides in the nucleus. Its function is as follows. Guanine nucleotide-binding proteins (G proteins) are involved as modulators or transducers in various transmembrane signaling systems. Activates effector molecule RhoA by binding and activating RhoGEFs (ARHGEF1/p115RhoGEF, ARHGEF11/PDZ-RhoGEF and ARHGEF12/LARG). GNA13-dependent Rho signaling subsequently regulates transcription factor AP-1 (activating protein-1). Promotes tumor cell invasion and metastasis by activating Rho/ROCK signaling pathway. Inhibits CDH1-mediated cell adhesion in a process independent from Rho activation. In lymphoid follicles, transmits P2RY8- and S1PR2-dependent signals that lead to inhibition of germinal center (GC) B cell growth and migration outside the GC niche. The chain is Guanine nucleotide-binding protein subunit alpha-13 (Gna13) from Mus musculus (Mouse).